The following is a 702-amino-acid chain: Elongation factor G (702 aa).

A tr-type G domain is found at Glu8–Val290. Residues Ala17–Thr24, Asp88–His92, and Asn142–Asp145 contribute to the GTP site.

The protein belongs to the TRAFAC class translation factor GTPase superfamily. Classic translation factor GTPase family. EF-G/EF-2 subfamily.

It is found in the cytoplasm. Catalyzes the GTP-dependent ribosomal translocation step during translation elongation. During this step, the ribosome changes from the pre-translocational (PRE) to the post-translocational (POST) state as the newly formed A-site-bound peptidyl-tRNA and P-site-bound deacylated tRNA move to the P and E sites, respectively. Catalyzes the coordinated movement of the two tRNA molecules, the mRNA and conformational changes in the ribosome. In Acidovorax sp. (strain JS42), this protein is Elongation factor G.